The chain runs to 141 residues: Large ribosomal subunit protein uL11 (141 aa).

Belongs to the universal ribosomal protein uL11 family. In terms of assembly, part of the ribosomal stalk of the 50S ribosomal subunit. Interacts with L10 and the large rRNA to form the base of the stalk. L10 forms an elongated spine to which L12 dimers bind in a sequential fashion forming a multimeric L10(L12)X complex. One or more lysine residues are methylated.

Its function is as follows. Forms part of the ribosomal stalk which helps the ribosome interact with GTP-bound translation factors. The protein is Large ribosomal subunit protein uL11 of Roseiflexus castenholzii (strain DSM 13941 / HLO8).